Consider the following 355-residue polypeptide: 3-dehydroquinate synthase (355 aa).

NAD(+) contacts are provided by residues 71 to 76 (EGEERK), 105 to 109 (GVVGD), 129 to 130 (TS), lysine 142, and lysine 151. The Zn(2+) site is built by glutamate 184, histidine 246, and histidine 263.

Belongs to the sugar phosphate cyclases superfamily. Dehydroquinate synthase family. Requires Co(2+) as cofactor. Zn(2+) serves as cofactor. NAD(+) is required as a cofactor.

It localises to the cytoplasm. It catalyses the reaction 7-phospho-2-dehydro-3-deoxy-D-arabino-heptonate = 3-dehydroquinate + phosphate. It participates in metabolic intermediate biosynthesis; chorismate biosynthesis; chorismate from D-erythrose 4-phosphate and phosphoenolpyruvate: step 2/7. Catalyzes the conversion of 3-deoxy-D-arabino-heptulosonate 7-phosphate (DAHP) to dehydroquinate (DHQ). In Streptococcus pneumoniae (strain ATCC 700669 / Spain 23F-1), this protein is 3-dehydroquinate synthase.